We begin with the raw amino-acid sequence, 147 residues long: Large ribosomal subunit protein uL13 (147 aa).

Belongs to the universal ribosomal protein uL13 family. In terms of assembly, part of the 50S ribosomal subunit.

Its function is as follows. This protein is one of the early assembly proteins of the 50S ribosomal subunit, although it is not seen to bind rRNA by itself. It is important during the early stages of 50S assembly. The protein is Large ribosomal subunit protein uL13 of Micrococcus luteus (strain ATCC 4698 / DSM 20030 / JCM 1464 / CCM 169 / CCUG 5858 / IAM 1056 / NBRC 3333 / NCIMB 9278 / NCTC 2665 / VKM Ac-2230) (Micrococcus lysodeikticus).